Reading from the N-terminus, the 106-residue chain is Small ribosomal subunit protein uS10 (106 aa).

It belongs to the universal ribosomal protein uS10 family. In terms of assembly, part of the 30S ribosomal subunit.

Its function is as follows. Involved in the binding of tRNA to the ribosomes. The polypeptide is Small ribosomal subunit protein uS10 (Parasynechococcus marenigrum (strain WH8102)).